The sequence spans 379 residues: Chaperone protein DnaJ (379 aa).

Residues 5–70 (DYYEVLGVSR…QKRAAYDQYG (66 aa)) enclose the J domain. The CR-type zinc finger occupies 134-212 (GVTKEIRIPT…CHGHGRVEKS (79 aa)). Zn(2+)-binding residues include Cys147, Cys150, Cys164, Cys167, Cys186, Cys189, Cys200, and Cys203. 4 CXXCXGXG motif repeats span residues 147–154 (CDVCHGSG), 164–171 (CPTCHGAG), 186–193 (CPHCHGRG), and 200–207 (CNKCHGHG).

Belongs to the DnaJ family. In terms of assembly, homodimer. It depends on Zn(2+) as a cofactor.

It localises to the cytoplasm. Participates actively in the response to hyperosmotic and heat shock by preventing the aggregation of stress-denatured proteins and by disaggregating proteins, also in an autonomous, DnaK-independent fashion. Unfolded proteins bind initially to DnaJ; upon interaction with the DnaJ-bound protein, DnaK hydrolyzes its bound ATP, resulting in the formation of a stable complex. GrpE releases ADP from DnaK; ATP binding to DnaK triggers the release of the substrate protein, thus completing the reaction cycle. Several rounds of ATP-dependent interactions between DnaJ, DnaK and GrpE are required for fully efficient folding. Also involved, together with DnaK and GrpE, in the DNA replication of plasmids through activation of initiation proteins. The polypeptide is Chaperone protein DnaJ (Yersinia pseudotuberculosis serotype O:1b (strain IP 31758)).